Here is a 215-residue protein sequence, read N- to C-terminus: Redox-sensing transcriptional repressor Rex (215 aa).

Positions 18-57 (LYYRFLKNLHASGKQRVSSAELSDAVKVDSATIRRDFSYF) form a DNA-binding region, H-T-H motif. 92 to 97 (GVGNLG) provides a ligand contact to NAD(+).

Belongs to the transcriptional regulatory Rex family. As to quaternary structure, homodimer.

It is found in the cytoplasm. Modulates transcription in response to changes in cellular NADH/NAD(+) redox state. The polypeptide is Redox-sensing transcriptional repressor Rex (Bacillus subtilis (strain 168)).